A 144-amino-acid polypeptide reads, in one-letter code: Necrosis-inducing secreted protein 1 (144 aa).

The N-terminal stretch at 1 to 19 (MQFRASIAAAAGLFALANA) is a signal peptide. N-linked (GlcNAc...) asparagine glycosylation is found at asparagine 88, asparagine 126, and asparagine 133. The segment at 103–132 (QYVVAAGLYSLYGASSSPTLSHYNVTVTVG) is BAK1/SERK3-binding.

Belongs to the NIS1 effector family.

The protein resides in the secreted. It localises to the host cytoplasm. Functionally, secreted effector that induces necrotic lesions in Nicotiana benthamiana. Interacts with the host receptor-like kinases (RLKs) BAK1/SERK3 and BKK1/SERK4, inhibits their kinase activity and suppresses INF1-induced pathogen-associated molecular pattern (PAMP)-triggered immunity (PTI) in N.benthamiana. Also interacts with the host receptor-like cytoplasmic kinase (RLCK) BIK1 and inhibits its kinase activity, thereby inhibiting PAMP-induced ROS generation. In PTI, phosphorylation relaying by RLKs and RLCKs is critical for the initiation of downstream signaling. The chain is Necrosis-inducing secreted protein 1 from Colletotrichum higginsianum (strain IMI 349063) (Crucifer anthracnose fungus).